We begin with the raw amino-acid sequence, 855 residues long: Protein translocase subunit SecA (855 aa).

ATP is bound by residues Q88, 106–110, and D509; that span reads GEGKT. The disordered stretch occupies residues 815-837; that stretch reads EANLQNKFEKKPARNEPCPCGSG. Residues C832, C834, C843, and C844 each contribute to the Zn(2+) site.

Belongs to the SecA family. Monomer and homodimer. Part of the essential Sec protein translocation apparatus which comprises SecA, SecYEG and auxiliary proteins SecDF-YajC and YidC. Zn(2+) is required as a cofactor.

It is found in the cell inner membrane. The protein resides in the cytoplasm. The catalysed reaction is ATP + H2O + cellular proteinSide 1 = ADP + phosphate + cellular proteinSide 2.. Its function is as follows. Part of the Sec protein translocase complex. Interacts with the SecYEG preprotein conducting channel. Has a central role in coupling the hydrolysis of ATP to the transfer of proteins into and across the cell membrane, serving as an ATP-driven molecular motor driving the stepwise translocation of polypeptide chains across the membrane. This chain is Protein translocase subunit SecA, found in Campylobacter fetus subsp. fetus (strain 82-40).